Consider the following 144-residue polypeptide: 3-hydroxyacyl-[acyl-carrier-protein] dehydratase FabZ (144 aa).

H51 is an active-site residue.

It belongs to the thioester dehydratase family. FabZ subfamily.

The protein resides in the cytoplasm. The catalysed reaction is a (3R)-hydroxyacyl-[ACP] = a (2E)-enoyl-[ACP] + H2O. In terms of biological role, involved in unsaturated fatty acids biosynthesis. Catalyzes the dehydration of short chain beta-hydroxyacyl-ACPs and long chain saturated and unsaturated beta-hydroxyacyl-ACPs. This Clostridium botulinum (strain Loch Maree / Type A3) protein is 3-hydroxyacyl-[acyl-carrier-protein] dehydratase FabZ.